Reading from the N-terminus, the 450-residue chain is Class E vacuolar protein-sorting machinery protein HSE1 (450 aa).

The VHS domain maps to 15 to 145 (ATDGKLRSDN…RIRRKWPGLL (131 aa)). 3 disordered regions span residues 141-167 (WPGLLEEPEKPSKQKVSHQEATDEDQE), 179-212 (FEKSKQQSNGSAVQSNSLQDHNQGQQQPQQQTTS), and 374-450 (PNTQ…PPNY). The span at 147–167 (EPEKPSKQKVSHQEATDEDQE) shows a compositional bias: basic and acidic residues. The UIM domain occupies 163–182 (DEDQELQRALKMSLEEFEKS). A compositionally biased stretch (polar residues) spans 184 to 196 (QQSNGSAVQSNSL). Positions 197-209 (QDHNQGQQQPQQQ) are enriched in low complexity. One can recognise an SH3 domain in the interval 212-271 (SGIRRVRALYDLNANEQDELSFRKGDVIVVLEQVYRDWWRGSLHGKIGIFPLNYVTPITE). Over residues 394-432 (NNTYQTTNGQYTQHNITPQQQYQVPSQNYQSQPPSMQSN) the composition is skewed to low complexity.

The protein belongs to the STAM family. Component of the ESCRT-0 complex composed of HSE1 and VPS27.

The protein resides in the endosome membrane. Functionally, component of the ESCRT-0 complex which is the sorting receptor for ubiquitinated cargo proteins at the multivesicular body (MVB). This is Class E vacuolar protein-sorting machinery protein HSE1 (HSE1) from Candida glabrata (strain ATCC 2001 / BCRC 20586 / JCM 3761 / NBRC 0622 / NRRL Y-65 / CBS 138) (Yeast).